Here is a 435-residue protein sequence, read N- to C-terminus: MALPCAFLSAAAAANATSFSSSPESRRCRSVHRVPSRPRPPLAPPARVMGKGNSKRKAANTRLWMRLDRRGGCEMILCDKSFVARRSGLPARDLRVLGPLLSRSPSILAREKAMVINLEFVRAIVTADEVLVLEPLAQEVLPFVEKLRKHFPLKSLDVDDVSTHMHTENQDGELAQDVSCYEVEGANHELPFEFQVLDFALEAVCLSYNSTISDLNRSAIAVLDDLMKSVSTRNLERVRSLKSSLTRLLASVQKVRDEVEHILDDNEAMAHLCTARKTKGQKDLLNTILFPETRLCRTHSSIENSTGIRTCVPSDSDAHILDMLLEAYFKQLDGIRNRIFLVRQYIVDTEDYISIQLDNKRNELLGLQLTLIIASFGIAINTFIAAAFAMNIPHRGYHFVIGVPFGQFVGATSFLCMSIVILLFTYAWRNRLLCT.

A disordered region spans residues 19 to 54; sequence FSSSPESRRCRSVHRVPSRPRPPLAPPARVMGKGNS. A run of 2 helical transmembrane segments spans residues 369-389 and 408-428; these read LTLI…AAFA and FVGA…TYAW.

The protein belongs to the CorA metal ion transporter (MIT) (TC 1.A.35.5) family.

It localises to the membrane. Functionally, putative magnesium transporter. This is Putative magnesium transporter MRS2-H (MRS2-H) from Oryza sativa subsp. indica (Rice).